A 528-amino-acid chain; its full sequence is MEVEQTSVRSDTNSTCEYLDAEGDPESPNLYQEADPDQEAEQQNHSIISELRDGLGTMRDNSALSPEPGQENKGLAASVESLALSTSTSAKTEDSIGGGLEEEYDYQHDSLWQGQKKHIFILSEAGKPIFSLHGNEDKLATLFGVIQALVSFVQMGQDAITSIHAGGIKFAFMQRSSLILVAASRSNMSVQQLQLQLGDVYNQILSILTYSHMTKIFERRKNFDLRRLLSGSERLFYNLLANDSSSAKVSNNIFTFLTNSIRVFPLPTTIRSQITSAIQSNCSKIKNLVFAVLIANNKLIALVRMKKYSIHPADLRLIFNLVECSESFKSSENWSPICLPKFDMNGYLHAHVSYLADDCQACLLLLSVDRDAFFTLAEAKAKITEKLRKSHCLEAINEELQQPFNAKLYQQVVGIPELRHFLYKPKSTAQLLCPMLRHPYKSLTELERLEAIYCDLLHRIHNSSRPLKLIYEMKEREVVLAWATGTYELYAIFEPVVDKATVIKYVDKLIKWIEKEYDVYFIRNHATF.

The segment covering 1–16 has biased composition (polar residues); sequence MEVEQTSVRSDTNSTC. Positions 1–50 are disordered; sequence MEVEQTSVRSDTNSTCEYLDAEGDPESPNLYQEADPDQEAEQQNHSIISE.

The protein belongs to the MON1/SAND family. In terms of assembly, component of the Mon1-Ccz1 guanyl-nucleotide exchange factor complex made up of Mon1, Ccz1 and Bulli; the interaction of Bulli with the Mon1-Ccz1 heterodimer is mediated via the C-terminal Mic1 domain of Bulli. Mon1 and Ccz1 form a stable complex which displays Rab7 GEF activity with or without Bulli; GEF activity is enhanced by Bulli possibly by improving membrane association of the complex. Interacts with Rab5 and Rab7; preferentially binds GTP-bound Rab5 and GDP-bound Rab7.

The protein localises to the cytoplasm. The protein resides in the cytosol. Its activity is regulated as follows. The Rab7 guanyl-nucleotide exchange factor (GEF) activity of the Mon1-Ccz1 complex is autoinhibited by the N-terminal disordered region of Mon1. GEF activity is stimulated by Rab5-mediated recruitment to membranes. In terms of biological role, part of the Mon1-Ccz1 guanyl-nucleotide exchange factor complex specific for Rab7 that promotes the exchange of GDP to GTP, converting Rab7 from an inactive GDP-bound form into an active GTP-bound form. Plays an important role in membrane trafficking through the secretory apparatus. Required for recruitment of Rab7 to endosomal and autophagosomal membranes to mediate endolysosomal and autolysosomal vesicle maturation. Required for fusion of multivesicular bodies and lysosomes but not their formation or trafficking. Involved in the replacement of Rab5 (and possibly Rab4) with Rab7, also known as Rab conversion or the Rab cascade, during endosomal maturation. The Mon1-Ccz1 complex is recruited to phosphatidylinositol 3-phosphate (PtdIns[3]P) enriched membranes by Rab5, which stimulates recruitment and guanyl-nucleotide exchange of Rab7. Together with Rab7 required for autolysosome formation in fat cells and autophagic degradation during starvation-induced basal and developmental autophagy. Involved in neuromuscular junction (NMJ) presynaptic bouton function and morphogenesis. Together with Rab7, regulates levels of postsynaptic glutamate receptor GluRIIA in the NMJ presynapse. The chain is Vacuolar fusion protein MON1 homolog from Drosophila melanogaster (Fruit fly).